A 94-amino-acid polypeptide reads, in one-letter code: Selenoprotein K (94 aa).

The helical transmembrane segment at 20–42 (LSLITDFFWGIAEFVVLFFKTLL) threads the bilayer. The segment at 47 to 94 (KKGRGYRNSSDSRYDDGRGPPGNPPRRMGRISHLHGPSPPPMAGGUGR) is disordered. U92 is a non-standard amino acid (selenocysteine).

This sequence belongs to the selenoprotein K family. Interacts with DERL1, DERL2, DERL3 and SELENOS. The SELENOK-SELENOS complex interacts with VCP. Interacts with ZDHHC6. Post-translationally, cleaved by CAPN2/m-calpain in resting macrophages but not in activated macrophages. Macrophage activation up-regulates expression of the calpain inhibitor CAST/calpastatin, resulting in inhibition of CAPN2 activity. Truncated SELENOK proteins produced by failed UGA/Sec decoding are ubiquitinated by the CRL2(KLHDC2) complex, which recognizes the diglycine (Gly-Gly) at the C-terminus of truncated SELENOK proteins.

The protein localises to the endoplasmic reticulum membrane. The protein resides in the cell membrane. In terms of biological role, required for Ca(2+) flux in immune cells and plays a role in T-cell proliferation and in T-cell and neutrophil migration. Involved in endoplasmic reticulum-associated degradation (ERAD) of soluble glycosylated proteins. Required for palmitoylation and cell surface expression of CD36 and involved in macrophage uptake of low-density lipoprotein and in foam cell formation. Together with ZDHHC6, required for palmitoylation of ITPR1 in immune cells, leading to regulate ITPR1 stability and function. Plays a role in protection of cells from ER stress-induced apoptosis. Protects cells from oxidative stress when overexpressed in cardiomyocytes. The polypeptide is Selenoprotein K (Chinchilla lanigera (Long-tailed chinchilla)).